Consider the following 271-residue polypeptide: MPELPEVEVTRQGITPYLVDQTVVDLIVRNPSLRWPVPELAKQIIGQTIRQVRRRAKYLLIDTDAGTSIVHLGMSGSLRILPHDTPVEKHDHIDLVLANGRILRFNDPRRFGAWLWCQLPEEAHPLLEKLGPEPLTDAFNVNQLAASLAGKKKAIKLCLMDNHIVVGVGNIYANEALFAAGIHPEAEAGKIDIERLTVLVAEVKQILAHAIKQGGTTLKDFTNADGKPGYFAQKLHVYGRGGETCTQCGNLLSEIRLGQRTTVFCSICQPR.

Catalysis depends on P2, which acts as the Schiff-base intermediate with DNA. Catalysis depends on E3, which acts as the Proton donor. K57 serves as the catalytic Proton donor; for beta-elimination activity. Residues H90, R109, and K151 each coordinate DNA. An FPG-type zinc finger spans residues 236–270 (HVYGRGGETCTQCGNLLSEIRLGQRTTVFCSICQP). R260 acts as the Proton donor; for delta-elimination activity in catalysis.

It belongs to the FPG family. Monomer. The cofactor is Zn(2+).

It carries out the reaction Hydrolysis of DNA containing ring-opened 7-methylguanine residues, releasing 2,6-diamino-4-hydroxy-5-(N-methyl)formamidopyrimidine.. It catalyses the reaction 2'-deoxyribonucleotide-(2'-deoxyribose 5'-phosphate)-2'-deoxyribonucleotide-DNA = a 3'-end 2'-deoxyribonucleotide-(2,3-dehydro-2,3-deoxyribose 5'-phosphate)-DNA + a 5'-end 5'-phospho-2'-deoxyribonucleoside-DNA + H(+). In terms of biological role, involved in base excision repair of DNA damaged by oxidation or by mutagenic agents. Acts as a DNA glycosylase that recognizes and removes damaged bases. Has a preference for oxidized purines, such as 7,8-dihydro-8-oxoguanine (8-oxoG). Has AP (apurinic/apyrimidinic) lyase activity and introduces nicks in the DNA strand. Cleaves the DNA backbone by beta-delta elimination to generate a single-strand break at the site of the removed base with both 3'- and 5'-phosphates. The protein is Formamidopyrimidine-DNA glycosylase of Shewanella oneidensis (strain ATCC 700550 / JCM 31522 / CIP 106686 / LMG 19005 / NCIMB 14063 / MR-1).